Consider the following 100-residue polypeptide: MFAVIETGGKQYLVKEGSIIKVEKLEAEEKKEVEINKVICISNNGLSYSSNATVKAEVLEQCRGEKIIIFKKKRRKNYRRKTGHRQYITVLRINEISLQK.

It belongs to the bacterial ribosomal protein bL21 family. As to quaternary structure, part of the 50S ribosomal subunit. Contacts protein L20.

This protein binds to 23S rRNA in the presence of protein L20. The protein is Large ribosomal subunit protein bL21 of Wolbachia sp. subsp. Drosophila simulans (strain wRi).